We begin with the raw amino-acid sequence, 86 residues long: Bacteriocin thailandicin (86 aa).

Residues 23–86 (LTANLGISSY…KYGAKYSAAW (64 aa)) constitute a cross-link (cyclopeptide (Leu-Trp)).

It is found in the secreted. Cyclopeptide antibiotic with bacteriolytic activity against the Gram-positive bacteria S.aureus and S.thermophilus, and lower activity against the Gram-negative bacteria E.coli and P.aeruginosa. This Enterococcus thailandicus protein is Bacteriocin thailandicin.